The chain runs to 212 residues: Pyrrolidone-carboxylate peptidase (212 aa).

Catalysis depends on residues glutamate 78, cysteine 141, and histidine 165.

This sequence belongs to the peptidase C15 family. As to quaternary structure, homotetramer.

The protein resides in the cytoplasm. It carries out the reaction Release of an N-terminal pyroglutamyl group from a polypeptide, the second amino acid generally not being Pro.. In terms of biological role, removes 5-oxoproline from various penultimate amino acid residues except L-proline. This chain is Pyrrolidone-carboxylate peptidase, found in Staphylococcus haemolyticus (strain JCSC1435).